A 158-amino-acid chain; its full sequence is N-alpha-acetyltransferase RimI (158 aa).

The N-acetyltransferase domain occupies 8-155 (VTIGALTRAD…DAYTMRRDSG (148 aa)).

The protein belongs to the acetyltransferase family. RimI subfamily. In terms of assembly, monomer. Interacts with TsaD. Interacts with GroS/GroES.

It carries out the reaction N-terminal L-methionyl-L-alanyl-[protein] + acetyl-CoA = N-terminal N(alpha)-acetyl-L-methionyl-L-alanyl-[protein] + CoA + H(+). The enzyme catalyses N-terminal L-methionyl-L-seryl-[protein] + acetyl-CoA = N-terminal N(alpha)-acetyl-L-methionyl-L-seryl-[protein] + CoA + H(+). The catalysed reaction is N-terminal L-methionyl-L-valyl-[protein] + acetyl-CoA = N-terminal N(alpha)-acetyl-L-methionyl-L-valyl-[protein] + CoA + H(+). It catalyses the reaction N-terminal L-methionyl-L-threonyl-[protein] + acetyl-CoA = N-terminal N(alpha)-acetyl-L-methionyl-L-threonyl-[protein] + CoA + H(+). It carries out the reaction N-terminal L-methionyl-L-lysyl-[protein] + acetyl-CoA = N-terminal N(alpha)-acetyl-L-methionyl-L-lysyl-[protein] + CoA + H(+). The enzyme catalyses N-terminal L-methionyl-L-leucyl-[protein] + acetyl-CoA = N-terminal N(alpha)-acetyl-L-methionyl-L-leucyl-[protein] + CoA + H(+). The catalysed reaction is N-terminal L-methionyl-L-phenylalanyl-[protein] + acetyl-CoA = N-terminal N(alpha)-acetyl-L-methionyl-L-phenylalanyl-[protein] + CoA + H(+). It catalyses the reaction N-terminal L-methionyl-L-tyrosyl-[protein] + acetyl-CoA = N-terminal N(alpha)-acetyl-L-methionyl-L-tyrosyl-[protein] + CoA + H(+). It carries out the reaction N-terminal glycyl-[protein] + acetyl-CoA = N-terminal N(alpha)-acetylglycyl-[protein] + CoA + H(+). The enzyme catalyses N-terminal L-alanyl-[protein] + acetyl-CoA = N-terminal N(alpha)-acetyl-L-alanyl-[protein] + CoA + H(+). The catalysed reaction is N-terminal L-seryl-[protein] + acetyl-CoA = N-terminal N(alpha)-acetyl-L-seryl-[protein] + CoA + H(+). It catalyses the reaction N-terminal L-valyl-[protein] + acetyl-CoA = N-terminal N(alpha)-acetyl-L-valyl-[protein] + CoA + H(+). It carries out the reaction N-terminal L-cysteinyl-[protein] + acetyl-CoA = N-terminal N(alpha)-acetyl-L-cysteinyl-[protein] + CoA + H(+). The enzyme catalyses N-terminal L-threonyl-[protein] + acetyl-CoA = N-terminal N(alpha)-acetyl-L-threonyl-[protein] + CoA + H(+). Its function is as follows. N-alpha-acetyltransferase that specifically mediates the acetylation of N-terminal residues. Able to mediate acetylation of a wide variety of N-terminal residues, with preference for hydrophobic N-termini. Acetylates GroS/GroES and GroEL1. Able to acetylate the ribosomal protein bS18, but it is unclear whether it acetylates its N-terminal alanine residue. The protein is N-alpha-acetyltransferase RimI of Mycobacterium tuberculosis (strain ATCC 25618 / H37Rv).